A 177-amino-acid chain; its full sequence is Large ribosomal subunit protein uL6 (177 aa).

The protein belongs to the universal ribosomal protein uL6 family. In terms of assembly, part of the 50S ribosomal subunit.

Its function is as follows. This protein binds to the 23S rRNA, and is important in its secondary structure. It is located near the subunit interface in the base of the L7/L12 stalk, and near the tRNA binding site of the peptidyltransferase center. This Laribacter hongkongensis (strain HLHK9) protein is Large ribosomal subunit protein uL6.